Here is a 430-residue protein sequence, read N- to C-terminus: Bifunctional protein GlmU (430 aa).

A pyrophosphorylase region spans residues methionine 1–lysine 223. UDP-N-acetyl-alpha-D-glucosamine is bound by residues leucine 8–glycine 11, lysine 22, and glycine 81–threonine 82. Aspartate 102 is a binding site for Mg(2+). UDP-N-acetyl-alpha-D-glucosamine is bound by residues glycine 135, glutamate 149, asparagine 164, and asparagine 221. Asparagine 221 serves as a coordination point for Mg(2+). Positions leucine 224–alanine 244 are linker. The segment at glycine 245 to lysine 430 is N-acetyltransferase. UDP-N-acetyl-alpha-D-glucosamine-binding residues include arginine 308 and lysine 325. The active-site Proton acceptor is the histidine 336. UDP-N-acetyl-alpha-D-glucosamine contacts are provided by tyrosine 339 and asparagine 350. Acetyl-CoA-binding positions include alanine 353, asparagine 359–tyrosine 360, serine 378, alanine 396, and arginine 413.

The protein in the N-terminal section; belongs to the N-acetylglucosamine-1-phosphate uridyltransferase family. In the C-terminal section; belongs to the transferase hexapeptide repeat family. Homotrimer. It depends on Mg(2+) as a cofactor.

The protein resides in the cytoplasm. It carries out the reaction alpha-D-glucosamine 1-phosphate + acetyl-CoA = N-acetyl-alpha-D-glucosamine 1-phosphate + CoA + H(+). It catalyses the reaction N-acetyl-alpha-D-glucosamine 1-phosphate + UTP + H(+) = UDP-N-acetyl-alpha-D-glucosamine + diphosphate. The protein operates within nucleotide-sugar biosynthesis; UDP-N-acetyl-alpha-D-glucosamine biosynthesis; N-acetyl-alpha-D-glucosamine 1-phosphate from alpha-D-glucosamine 6-phosphate (route II): step 2/2. It functions in the pathway nucleotide-sugar biosynthesis; UDP-N-acetyl-alpha-D-glucosamine biosynthesis; UDP-N-acetyl-alpha-D-glucosamine from N-acetyl-alpha-D-glucosamine 1-phosphate: step 1/1. Its pathway is bacterial outer membrane biogenesis; LPS lipid A biosynthesis. Its function is as follows. Catalyzes the last two sequential reactions in the de novo biosynthetic pathway for UDP-N-acetylglucosamine (UDP-GlcNAc). The C-terminal domain catalyzes the transfer of acetyl group from acetyl coenzyme A to glucosamine-1-phosphate (GlcN-1-P) to produce N-acetylglucosamine-1-phosphate (GlcNAc-1-P), which is converted into UDP-GlcNAc by the transfer of uridine 5-monophosphate (from uridine 5-triphosphate), a reaction catalyzed by the N-terminal domain. The polypeptide is Bifunctional protein GlmU (Sulfurovum sp. (strain NBC37-1)).